Here is a 263-residue protein sequence, read N- to C-terminus: MSDILEKILATKTEEVAAARKARPLASLRNDAETRRDIRDFAGALTRCQSAGRAGVIAEIKKASPSKGIIRPDFQPAAIAESYAGHGAACLSVLTDVRYFQGAADYLVAARDACDLPVLRKDFLVDEYQVFEARAMGADCILLIVAALDNARLADFEAIARELGMAVLVETHDAAELDRALRLASPLIGVNNRNLRTFDVSLDTTLSLLPVIQAEGRMAITESGISTPDDVIRMREAGVNSFLVGEAFMREADPGAALAHLFA.

Belongs to the TrpC family.

It carries out the reaction 1-(2-carboxyphenylamino)-1-deoxy-D-ribulose 5-phosphate + H(+) = (1S,2R)-1-C-(indol-3-yl)glycerol 3-phosphate + CO2 + H2O. The protein operates within amino-acid biosynthesis; L-tryptophan biosynthesis; L-tryptophan from chorismate: step 4/5. This Laribacter hongkongensis (strain HLHK9) protein is Indole-3-glycerol phosphate synthase.